We begin with the raw amino-acid sequence, 83 residues long: Small ribosomal subunit protein eS27 (83 aa).

The C4-type zinc finger occupies 37–59; it reads CPGCFNITTVFSHAQTVVICGSC.

The protein belongs to the eukaryotic ribosomal protein eS27 family. In terms of assembly, component of the small ribosomal subunit (SSU). Mature yeast ribosomes consist of a small (40S) and a large (60S) subunit. The 40S small subunit contains 1 molecule of ribosomal RNA (18S rRNA) and at least 33 different proteins. The large 60S subunit contains 3 rRNA molecules (25S, 5.8S and 5S rRNA) and at least 46 different proteins. Zn(2+) serves as cofactor.

It localises to the cytoplasm. Its function is as follows. Component of the ribosome, a large ribonucleoprotein complex responsible for the synthesis of proteins in the cell. The small ribosomal subunit (SSU) binds messenger RNAs (mRNAs) and translates the encoded message by selecting cognate aminoacyl-transfer RNA (tRNA) molecules. The large subunit (LSU) contains the ribosomal catalytic site termed the peptidyl transferase center (PTC), which catalyzes the formation of peptide bonds, thereby polymerizing the amino acids delivered by tRNAs into a polypeptide chain. The nascent polypeptides leave the ribosome through a tunnel in the LSU and interact with protein factors that function in enzymatic processing, targeting, and the membrane insertion of nascent chains at the exit of the ribosomal tunnel. This is Small ribosomal subunit protein eS27 (rps27) from Schizosaccharomyces pombe (strain 972 / ATCC 24843) (Fission yeast).